A 309-amino-acid chain; its full sequence is MANIFENCSYHSPYEPYYLNCTNTTNQCTLVQDVETIESIIFWIDFLIPCTLFVVACFLNAYYLSILVPEFTEMNDITKKQYIFMVSRAISALTACVIMLALRILQLITSSFTIYFLFFLIDDLSFYSLLGSYVGSAILLYLATIRPILYSNRISVRTVYKFAIANLITSVVLAITTAMFQAADLSDGPFQCDLKHCQPITNMIMLVLILTSFLIPIVTLSFVLVTLCFYKNRSESIGDFTTDNSVSKSARTRLAWTLFTFTLITLTEAIPSFYLVGTSIGQLLSTWILCAHCYSIPEYEKFGYNIQKS.

6 helical membrane-spanning segments follow: residues 39 to 59 (SIIFWIDFLIPCTLFVVACFL), 82 to 102 (YIFMVSRAISALTACVIMLAL), 114 to 134 (IYFLFFLIDDLSFYSLLGSYV), 162 to 182 (FAIANLITSVVLAITTAMFQA), 204 to 224 (IMLVLILTSFLIPIVTLSFVL), and 256 to 276 (WTLFTFTLITLTEAIPSFYLV).

Belongs to the G-protein coupled receptor 1 family. B0244 subfamily.

Its subcellular location is the cell membrane. In Caenorhabditis elegans, this protein is Putative G-protein coupled receptor B0244.4.